The following is a 390-amino-acid chain: Chorismate synthase (390 aa).

Residues R39 and R45 each coordinate NADP(+). FMN contacts are provided by residues 132–134 (RSS), 253–254 (NA), G298, 313–317 (KPIPT), and R339.

The protein belongs to the chorismate synthase family. Homotetramer. FMNH2 is required as a cofactor.

The catalysed reaction is 5-O-(1-carboxyvinyl)-3-phosphoshikimate = chorismate + phosphate. The protein operates within metabolic intermediate biosynthesis; chorismate biosynthesis; chorismate from D-erythrose 4-phosphate and phosphoenolpyruvate: step 7/7. Functionally, catalyzes the anti-1,4-elimination of the C-3 phosphate and the C-6 proR hydrogen from 5-enolpyruvylshikimate-3-phosphate (EPSP) to yield chorismate, which is the branch point compound that serves as the starting substrate for the three terminal pathways of aromatic amino acid biosynthesis. This reaction introduces a second double bond into the aromatic ring system. In Bacillus subtilis (strain 168), this protein is Chorismate synthase.